The primary structure comprises 393 residues: Acyltransferase ato1 (393 aa).

It belongs to the lysine N-acyltransferase mbtK family.

Its pathway is siderophore biosynthesis; ferrichrome biosynthesis. Functionally, L-ornithine N(5)-monooxygenase; part of the siderophore biosynthetic pathway. Omphalotus olearius produces ferrichrome A, but no other siderophore has been detected. Ferrichrome A consists of a hexapeptide ring made up of one glycine, two serine, and three N(5)-hydroxyornithine amino acid residues, the latter acylated by trans-(alpha-methyl)-glutaconic acid residues. The biosynthesis of ferrichrome A depends on the hydroxylation of ornithine to N(5)-hydroxyornithine, catalyzed by the monooxygenase omo1. The second step, the acylation of N(5)-hydroxy-L-ornithine is probably catalyzed by the N-acyltransferase ato1. Finally, assembly of ferrichrome A is catalyzed by the nonribosomal peptide synthase (NRPS) fso1. This chain is Acyltransferase ato1, found in Omphalotus olearius (Jack o'lantern).